We begin with the raw amino-acid sequence, 566 residues long: Proline--tRNA ligase (566 aa).

Belongs to the class-II aminoacyl-tRNA synthetase family. ProS type 1 subfamily. As to quaternary structure, homodimer.

Its subcellular location is the cytoplasm. It catalyses the reaction tRNA(Pro) + L-proline + ATP = L-prolyl-tRNA(Pro) + AMP + diphosphate. Its function is as follows. Catalyzes the attachment of proline to tRNA(Pro) in a two-step reaction: proline is first activated by ATP to form Pro-AMP and then transferred to the acceptor end of tRNA(Pro). As ProRS can inadvertently accommodate and process non-cognate amino acids such as alanine and cysteine, to avoid such errors it has two additional distinct editing activities against alanine. One activity is designated as 'pretransfer' editing and involves the tRNA(Pro)-independent hydrolysis of activated Ala-AMP. The other activity is designated 'posttransfer' editing and involves deacylation of mischarged Ala-tRNA(Pro). The misacylated Cys-tRNA(Pro) is not edited by ProRS. The polypeptide is Proline--tRNA ligase (Exiguobacterium sibiricum (strain DSM 17290 / CCUG 55495 / CIP 109462 / JCM 13490 / 255-15)).